The chain runs to 273 residues: Cyclic di-AMP synthase CdaA (273 aa).

A run of 3 helical transmembrane segments spans residues Leu-12–Ile-32, Leu-40–Ser-60, and Thr-61–Phe-81. A DAC domain is found at Gln-82–Glu-242.

Belongs to the adenylate cyclase family. DacA/CdaA subfamily. As to quaternary structure, probably a homodimer. Interacts with CdaR. May interact with GlmM.

Its subcellular location is the cell membrane. The catalysed reaction is 2 ATP = 3',3'-c-di-AMP + 2 diphosphate. Its activity is regulated as follows. DAC activity is stimulated about 20-fold in E.coli by coexpression with CdaR. Functionally, one of 3 paralogous diadenylate cyclases (DAC) in this bacteria, catalyzing the condensation of 2 ATP molecules into cyclic di-AMP (c-di-AMP). Upon expression in E.coli leads to c-di-AMP synthesis. Probably the main producer of c-di-AMP for the cell; is probably implicated in control of peptidoglycan synthesis. In B.subtilis c-di-AMP is a second messenger that mediates growth, DNA repair and cell wall homeostasis; it is toxic when present in excess. The chain is Cyclic di-AMP synthase CdaA from Bacillus subtilis (strain 168).